Consider the following 459-residue polypeptide: MPLPLVAIVGRPNVGKSTLVNRMAGVRSAIVHDEPGVTRDRLYQEVEWNGRRLRVVDTGGLVFGDDSEFLPHIRQQAMAAMAEAQAVIFVVDGREGLTPADVEVADWLRKQPLPVVVAVNKCESGQMGLAQAAAFWELGLGDPIPCSGIHGNGVAELLEAVLAHLPEVTAEAAGEPDPIAVSIVGRPNVGKSSLLNRLVGSERAIVSPISGTTRDAIDTVVTWEGQPYRLIDTAGIRKKNRVQYGIEFFSINRAFKAIQRSDAVLLVIDALEGVTEQDQRLAGRIEEEGRACVVVVNKWDAVENKDTHTINEFTREIRDRLYFIEWAPLLFVSALTGQRTHKIFEQVNTVVAAHRKRVPTAVVNEVLQDALAWQSPPTNRQGKQGRIYYGTQVADRPPTFVLFVNDPDLFKDNYRRFLEKHFRQNLDFTGTPIRFLWRGKSERLVGRAVRKLERSLTSR.

2 consecutive EngA-type G domains span residues 4 to 169 (PLVA…PEVT) and 179 to 355 (IAVS…AAHR). GTP is bound by residues 10–17 (GRPNVGKS), 57–61 (DTGGL), 120–123 (NKCE), 185–192 (GRPNVGKS), 232–236 (DTAGI), and 297–300 (NKWD). The KH-like domain maps to 356–441 (KRVPTAVVNE…PIRFLWRGKS (86 aa)).

It belongs to the TRAFAC class TrmE-Era-EngA-EngB-Septin-like GTPase superfamily. EngA (Der) GTPase family. Associates with the 50S ribosomal subunit.

Functionally, GTPase that plays an essential role in the late steps of ribosome biogenesis. This chain is GTPase Der, found in Synechococcus sp. (strain JA-2-3B'a(2-13)) (Cyanobacteria bacterium Yellowstone B-Prime).